The chain runs to 226 residues: Isoprenyl transferase (226 aa).

Residue Asp12 is part of the active site. Asp12 contributes to the Mg(2+) binding site. Substrate is bound by residues 13 to 16, Trp17, Lys25, His29, and 57 to 59; these read GNAR and SFE. The active-site Proton acceptor is the Asn60. Substrate contacts are provided by residues Trp61, Arg63, Arg174, and 180–182; that span reads RIS. Glu193 provides a ligand contact to Mg(2+).

Belongs to the UPP synthase family. As to quaternary structure, homodimer. It depends on Mg(2+) as a cofactor.

In terms of biological role, catalyzes the condensation of isopentenyl diphosphate (IPP) with allylic pyrophosphates generating different type of terpenoids. The sequence is that of Isoprenyl transferase from Rickettsia prowazekii (strain Madrid E).